We begin with the raw amino-acid sequence, 41 residues long: uncharacterized protein (41 aa).

The disordered stretch occupies residues 19 to 41; sequence NSTRNSSSSSRSSYSSRTTVFSL.

This is an uncharacterized protein from Dictyostelium discoideum (Social amoeba).